A 265-amino-acid polypeptide reads, in one-letter code: Glutamate racemase (265 aa).

Substrate contacts are provided by residues 7–8 and 39–40; these read DS and YG. Catalysis depends on Cys-70, which acts as the Proton donor/acceptor. Position 71–72 (71–72) interacts with substrate; that stretch reads NT. Residue Cys-182 is the Proton donor/acceptor of the active site. Residue 183–184 participates in substrate binding; it reads TH.

Belongs to the aspartate/glutamate racemases family.

The catalysed reaction is L-glutamate = D-glutamate. It participates in cell wall biogenesis; peptidoglycan biosynthesis. In terms of biological role, provides the (R)-glutamate required for cell wall biosynthesis. In Lachnospira eligens (strain ATCC 27750 / DSM 3376 / VPI C15-48 / C15-B4) (Eubacterium eligens), this protein is Glutamate racemase.